The chain runs to 143 residues: Peptide methionine sulfoxide reductase MsrB (143 aa).

One can recognise a MsrB domain in the interval 16 to 139; the sequence is DAELRRRLTP…NSAALNFEAK (124 aa). Zn(2+)-binding residues include Cys-55, Cys-58, Cys-104, and Cys-107. Catalysis depends on Cys-128, which acts as the Nucleophile.

The protein belongs to the MsrB Met sulfoxide reductase family. Requires Zn(2+) as cofactor.

It catalyses the reaction L-methionyl-[protein] + [thioredoxin]-disulfide + H2O = L-methionyl-(R)-S-oxide-[protein] + [thioredoxin]-dithiol. The polypeptide is Peptide methionine sulfoxide reductase MsrB (Burkholderia mallei (strain NCTC 10229)).